The primary structure comprises 1083 residues: Kinesin-like protein klp-19 (1083 aa).

The 323-residue stretch at 6-328 folds into the Kinesin motor domain; that stretch reads SLRVVVRARP…LRYADRAKQI (323 aa). 85–92 contacts ATP; it reads GQTGSGKT. The stretch at 408–435 forms a coiled coil; it reads MSALTQKNSRLEEDKAKLQSMLTDVRNT. The span at 458 to 471 shows a compositional bias: acidic residues; it reads TEESTTLADDDNDE. The tract at residues 458 to 479 is disordered; that stretch reads TEESTTLADDDNDETALGGQDD. Positions 487–650 form a coiled coil; sequence LPELQAELDD…KSKLQKREND (164 aa). The segment covering 1044 to 1055 has biased composition (polar residues); sequence DDSQPSPSNSTF. Positions 1044 to 1083 are disordered; that stretch reads DDSQPSPSNSTFVIGAAPTSEADGVPPIKRKSRRTDLGPL.

Belongs to the TRAFAC class myosin-kinesin ATPase superfamily. Kinesin family. Expressed in the gonad.

It is found in the nucleus. The protein resides in the nucleoplasm. Its subcellular location is the cytoplasm. The protein localises to the cytoskeleton. It localises to the spindle. It is found in the chromosome. Required for chromosome movement and orientation on spindle poles in mitosis and meiosis. May play a role in early anterior-posterior chromosome movement in mitotic embryos. The protein is Kinesin-like protein klp-19 of Caenorhabditis elegans.